The following is a 397-amino-acid chain: Enoyl-[acyl-carrier-protein] reductase [NADH] (397 aa).

Residues 48–53 (GASTGY), 74–75 (LE), 111–112 (DA), and 139–140 (LA) each bind NAD(+). Substrate is bound at residue Tyr-225. Tyr-235 acts as the Proton donor in catalysis. Residues Lys-244 and 273–275 (VVT) contribute to the NAD(+) site.

It belongs to the TER reductase family. Monomer.

It carries out the reaction a 2,3-saturated acyl-[ACP] + NAD(+) = a (2E)-enoyl-[ACP] + NADH + H(+). It participates in lipid metabolism; fatty acid biosynthesis. In terms of biological role, involved in the final reduction of the elongation cycle of fatty acid synthesis (FAS II). Catalyzes the reduction of a carbon-carbon double bond in an enoyl moiety that is covalently linked to an acyl carrier protein (ACP). This is Enoyl-[acyl-carrier-protein] reductase [NADH] from Tolumonas auensis (strain DSM 9187 / NBRC 110442 / TA 4).